A 427-amino-acid chain; its full sequence is Mannosylglucosylglycerate synthase (427 aa).

This sequence belongs to the glycosyltransferase group 1 family. Co(2+) is required as a cofactor. It depends on Mg(2+) as a cofactor. Requires Mn(2+) as cofactor. The cofactor is Ni(2+).

The enzyme catalyses (2R)-2-O-(alpha-D-glucopyranosyl)-glycerate + GDP-alpha-D-mannose = (2R)-2-O-[alpha-D-mannopyranosyl-(1-&gt;2)-alpha-D-glucopyranosyl]-glycerate + GDP + H(+). Catalyzes the synthesis of mannosylglucosylglycerate (MGG) from glucosylglycerate (GG) and GDP-mannose. The protein is Mannosylglucosylglycerate synthase of Thermotoga maritima (strain ATCC 43589 / DSM 3109 / JCM 10099 / NBRC 100826 / MSB8).